We begin with the raw amino-acid sequence, 554 residues long: Dihydroxy-acid dehydratase (554 aa).

Cys51 contacts [2Fe-2S] cluster. Residue Asp83 coordinates Mg(2+). Residue Cys124 participates in [2Fe-2S] cluster binding. Asp125 and Lys126 together coordinate Mg(2+). The residue at position 126 (Lys126) is an N6-carboxylysine. Residue Cys193 coordinates [2Fe-2S] cluster. Glu444 provides a ligand contact to Mg(2+). Catalysis depends on Ser470, which acts as the Proton acceptor.

The protein belongs to the IlvD/Edd family. Homodimer. Requires [2Fe-2S] cluster as cofactor. It depends on Mg(2+) as a cofactor.

The catalysed reaction is (2R)-2,3-dihydroxy-3-methylbutanoate = 3-methyl-2-oxobutanoate + H2O. The enzyme catalyses (2R,3R)-2,3-dihydroxy-3-methylpentanoate = (S)-3-methyl-2-oxopentanoate + H2O. The protein operates within amino-acid biosynthesis; L-isoleucine biosynthesis; L-isoleucine from 2-oxobutanoate: step 3/4. It functions in the pathway amino-acid biosynthesis; L-valine biosynthesis; L-valine from pyruvate: step 3/4. Functionally, functions in the biosynthesis of branched-chain amino acids. Catalyzes the dehydration of (2R,3R)-2,3-dihydroxy-3-methylpentanoate (2,3-dihydroxy-3-methylvalerate) into 2-oxo-3-methylpentanoate (2-oxo-3-methylvalerate) and of (2R)-2,3-dihydroxy-3-methylbutanoate (2,3-dihydroxyisovalerate) into 2-oxo-3-methylbutanoate (2-oxoisovalerate), the penultimate precursor to L-isoleucine and L-valine, respectively. This Vesicomyosocius okutanii subsp. Calyptogena okutanii (strain HA) protein is Dihydroxy-acid dehydratase.